The sequence spans 85 residues: Large ribosomal subunit protein bL27 (85 aa).

Residues 1–20 (MAHKKAGGSTRNGRDSEAKR) form a disordered region.

The protein belongs to the bacterial ribosomal protein bL27 family.

This is Large ribosomal subunit protein bL27 from Serratia proteamaculans (strain 568).